A 201-amino-acid chain; its full sequence is MACATLKRALDWESMNQRPPKRRRCNPFGQAGSNAGPASPSRDGPSTSAGLPHTPSNRFAKDSTEPSPFSESSLAKMSPDKMAESLCNEIKRLHKRKQLPITSSALERMQDSESSGSEMGPESPRRPDSPQNLMRHGEKALFTFKQVQLICESMIKERENQLRERYESVLTTKLAEQYDAFVKFTYDQIQRRYEAAPSYLS.

The segment at 1-133 (MACATLKRAL…PRRPDSPQNL (133 aa)) is disordered. The Nuclear localization signal signature appears at 20–25 (PKRRRC). Phosphoserine is present on residues Ser39 and Ser41. 2 stretches are compositionally biased toward polar residues: residues 44 to 57 (GPSTSAGLPHTPSN) and 65 to 75 (EPSPFSESSLA). Position 67 is a phosphoserine (Ser67). Over residues 112–122 (SESSGSEMGPE) the composition is skewed to low complexity. Phosphoserine occurs at positions 123 and 129.

The protein belongs to the akirin family. As to quaternary structure, interacts with dmap1. Interacts with bap60 and rel; interaction is immune stimulation-dependent; activates selected rel target gene promoters. Interacts with bap55; interaction is immune stimulation-dependent. Interacts with twi. Post-translationally, polyubiquitinated via 'Lys-63'-linked ubiquitin by Hyd, promoting interaction with rel. As to expression, ubiquitous.

The protein resides in the nucleus. Molecular adapter that acts as a bridge between a variety of multiprotein complexes, and which is required for embryonic development and for normal innate immune response. Acts as a regulator of embryonic myogenesis by bridging Twist (twi) with the SWI/SNF-like Brahma complex, promoting expression of twi-regulated genes during myogenesis. Effector of immune deficiency pathway (Imd) by acting either downstream of, or at the level of, the NF-kappa-B factor Relish (Rel). Acts by bridging the NF-kappa-B factor Rel and the Brahma complex through bap60 interaction, leading to activation a subset of NF-kappa-B factor Relish (Rel) effector genes. Not part of the Toll pathway. Required for the formation of the heart by promoting expression ot tinman (tin). This Drosophila melanogaster (Fruit fly) protein is Akirin.